Reading from the N-terminus, the 886-residue chain is Protein translocase subunit SecA (886 aa).

Residues Gln85, Gly103 to Thr107, and Asp492 contribute to the ATP site. Basic and acidic residues predominate over residues Arg841–Arg864. The segment at Arg841–Asp866 is disordered. Cys868, Cys870, Cys879, and Cys880 together coordinate Zn(2+).

Belongs to the SecA family. Monomer and homodimer. Part of the essential Sec protein translocation apparatus which comprises SecA, SecYEG and auxiliary proteins SecDF. Other proteins may also be involved. The cofactor is Zn(2+).

The protein resides in the cell membrane. It is found in the cytoplasm. The enzyme catalyses ATP + H2O + cellular proteinSide 1 = ADP + phosphate + cellular proteinSide 2.. Functionally, part of the Sec protein translocase complex. Interacts with the SecYEG preprotein conducting channel. Has a central role in coupling the hydrolysis of ATP to the transfer of proteins into and across the cell membrane, serving as an ATP-driven molecular motor driving the stepwise translocation of polypeptide chains across the membrane. The polypeptide is Protein translocase subunit SecA (Pelotomaculum thermopropionicum (strain DSM 13744 / JCM 10971 / SI)).